The sequence spans 343 residues: UDP-glucuronic acid decarboxylase 6 (343 aa).

The interval 1-22 (MASNSSNGTTTTKPPPMPSPLR) is disordered. Ala-2 is subject to N-acetylalanine. 62–87 (DNYFTGSKDNLKKWIGHPRFELIRHD) serves as a coordination point for NAD(+). A substrate-binding site is contributed by Arg-171. Residue Tyr-174 is the Proton acceptor of the active site. 174-178 (YDEGK) serves as a coordination point for NAD(+). Substrate is bound at residue Asn-203. Arg-215 lines the NAD(+) pocket. Residues 216–220 (VVSNF), 233–240 (QKPGTQTR), and 300–304 (DPRQR) contribute to the substrate site.

Belongs to the NAD(P)-dependent epimerase/dehydratase family. UDP-glucuronic acid decarboxylase subfamily. It depends on NAD(+) as a cofactor.

The protein resides in the cytoplasm. The enzyme catalyses UDP-alpha-D-glucuronate + H(+) = UDP-alpha-D-xylose + CO2. The protein operates within nucleotide-sugar biosynthesis; UDP-alpha-D-xylose biosynthesis; UDP-alpha-D-xylose from UDP-alpha-D-glucuronate: step 1/1. Its function is as follows. Catalyzes the NAD-dependent decarboxylation of UDP-glucuronic acid to UDP-xylose. Necessary for the biosynthesis of the core tetrasaccharide in glycosaminoglycan biosynthesis. The protein is UDP-glucuronic acid decarboxylase 6 (UXS6) of Arabidopsis thaliana (Mouse-ear cress).